Here is a 76-residue protein sequence, read N- to C-terminus: Putative membrane protein insertion efficiency factor (76 aa).

The protein belongs to the UPF0161 family.

Its subcellular location is the cell inner membrane. In terms of biological role, could be involved in insertion of integral membrane proteins into the membrane. This is Putative membrane protein insertion efficiency factor from Paraburkholderia phymatum (strain DSM 17167 / CIP 108236 / LMG 21445 / STM815) (Burkholderia phymatum).